Consider the following 210-residue polypeptide: Large ribosomal subunit protein bL17 (210 aa).

The segment at 177–210 (TRSAQRPAFEQDAPESDSAPEAEAKTEEETASAN) is disordered.

It belongs to the bacterial ribosomal protein bL17 family. Part of the 50S ribosomal subunit. Contacts protein L32.

The sequence is that of Large ribosomal subunit protein bL17 from Rhodopirellula baltica (strain DSM 10527 / NCIMB 13988 / SH1).